Here is an 86-residue protein sequence, read N- to C-terminus: MANIKQQKKRNKTNEKRRLQNFSFKSSVKTVVKQVKTAVANADKQKALALLSVAYKKFDKGVSKRVYHANFSARNKSDLQKLVNTL.

The span at 1 to 11 shows a compositional bias: basic residues; that stretch reads MANIKQQKKRN. The segment at 1–20 is disordered; the sequence is MANIKQQKKRNKTNEKRRLQ.

It belongs to the bacterial ribosomal protein bS20 family.

Functionally, binds directly to 16S ribosomal RNA. This Aster yellows witches'-broom phytoplasma (strain AYWB) protein is Small ribosomal subunit protein bS20.